The primary structure comprises 201 residues: Small ribosomal subunit protein uS4c (201 aa).

The disordered stretch occupies residues 20 to 44; that stretch reads GLTNKKPRAGSDLRNQSRSGKKSQY. In terms of domain architecture, S4 RNA-binding spans 89–150; it reads MRLDNILFRL…EQKSKALIQI (62 aa).

It belongs to the universal ribosomal protein uS4 family. As to quaternary structure, part of the 30S ribosomal subunit. Contacts protein S5. The interaction surface between S4 and S5 is involved in control of translational fidelity.

Its subcellular location is the plastid. It is found in the chloroplast. Its function is as follows. One of the primary rRNA binding proteins, it binds directly to 16S rRNA where it nucleates assembly of the body of the 30S subunit. In terms of biological role, with S5 and S12 plays an important role in translational accuracy. The polypeptide is Small ribosomal subunit protein uS4c (rps4) (Nicotiana tomentosiformis (Tobacco)).